A 75-amino-acid polypeptide reads, in one-letter code: Sec-independent protein translocase protein TatA (75 aa).

A helical transmembrane segment spans residues 1 to 21 (MGSFSIWHWLIVLVIVALVFG). The tract at residues 44 to 75 (KDANSDKPAEQVTQQKVADDTIDVQAKEKTNS) is disordered.

It belongs to the TatA/E family. The Tat system comprises two distinct complexes: a TatABC complex, containing multiple copies of TatA, TatB and TatC subunits, and a separate TatA complex, containing only TatA subunits. Substrates initially bind to the TatABC complex, which probably triggers association of the separate TatA complex to form the active translocon.

It localises to the cell inner membrane. Its function is as follows. Part of the twin-arginine translocation (Tat) system that transports large folded proteins containing a characteristic twin-arginine motif in their signal peptide across membranes. TatA could form the protein-conducting channel of the Tat system. The chain is Sec-independent protein translocase protein TatA from Bordetella petrii (strain ATCC BAA-461 / DSM 12804 / CCUG 43448).